Reading from the N-terminus, the 504-residue chain is Glucose-6-phosphate isomerase (504 aa).

The active-site Proton donor is the Glu333. Active-site residues include His364 and Lys473.

The protein belongs to the GPI family.

The protein localises to the cytoplasm. It carries out the reaction alpha-D-glucose 6-phosphate = beta-D-fructose 6-phosphate. The protein operates within carbohydrate biosynthesis; gluconeogenesis. It functions in the pathway carbohydrate degradation; glycolysis; D-glyceraldehyde 3-phosphate and glycerone phosphate from D-glucose: step 2/4. Functionally, catalyzes the reversible isomerization of glucose-6-phosphate to fructose-6-phosphate. This is Glucose-6-phosphate isomerase from Xanthomonas euvesicatoria pv. vesicatoria (strain 85-10) (Xanthomonas campestris pv. vesicatoria).